The following is a 431-amino-acid chain: Adenylosuccinate synthetase (431 aa).

Residues Gly-13–Lys-19 and Gly-41–Thr-43 contribute to the GTP site. Asp-14 functions as the Proton acceptor in the catalytic mechanism. Mg(2+)-binding residues include Asp-14 and Gly-41. Residues Asp-14 to Lys-17, Asn-39 to His-42, Thr-130, Arg-144, Gln-225, Thr-240, and Arg-304 contribute to the IMP site. His-42 acts as the Proton donor in catalysis. Residue Ala-300–Arg-306 coordinates substrate. Residues Arg-306, Lys-332–Asp-334, and Ser-415–Gly-417 each bind GTP.

It belongs to the adenylosuccinate synthetase family. Homodimer. Mg(2+) serves as cofactor.

Its subcellular location is the cytoplasm. The enzyme catalyses IMP + L-aspartate + GTP = N(6)-(1,2-dicarboxyethyl)-AMP + GDP + phosphate + 2 H(+). Its pathway is purine metabolism; AMP biosynthesis via de novo pathway; AMP from IMP: step 1/2. In terms of biological role, plays an important role in the de novo pathway of purine nucleotide biosynthesis. Catalyzes the first committed step in the biosynthesis of AMP from IMP. The polypeptide is Adenylosuccinate synthetase (Legionella pneumophila subsp. pneumophila (strain Philadelphia 1 / ATCC 33152 / DSM 7513)).